Consider the following 265-residue polypeptide: Phosphatidylglycerol--prolipoprotein diacylglyceryl transferase (265 aa).

The next 4 membrane-spanning stretches (helical) occupy residues 10–30 (VAIA…LIGI), 56–76 (LVFW…VLFY), 87–107 (LILQ…GVLL), and 117–137 (GKGF…GLGA). Arg139 is a binding site for a 1,2-diacyl-sn-glycero-3-phospho-(1'-sn-glycerol). The next 3 membrane-spanning stretches (helical) occupy residues 172–192 (PSQL…LWFY), 200–220 (MAVS…VEFV), and 227–247 (LGYL…PMIL).

The protein belongs to the Lgt family.

It is found in the cell inner membrane. It catalyses the reaction L-cysteinyl-[prolipoprotein] + a 1,2-diacyl-sn-glycero-3-phospho-(1'-sn-glycerol) = an S-1,2-diacyl-sn-glyceryl-L-cysteinyl-[prolipoprotein] + sn-glycerol 1-phosphate + H(+). It functions in the pathway protein modification; lipoprotein biosynthesis (diacylglyceryl transfer). Its function is as follows. Catalyzes the transfer of the diacylglyceryl group from phosphatidylglycerol to the sulfhydryl group of the N-terminal cysteine of a prolipoprotein, the first step in the formation of mature lipoproteins. This is Phosphatidylglycerol--prolipoprotein diacylglyceryl transferase from Azotobacter vinelandii (strain DJ / ATCC BAA-1303).